The following is a 253-amino-acid chain: Probable transcriptional regulatory protein AM1_1847 (253 aa).

This sequence belongs to the TACO1 family.

Its subcellular location is the cytoplasm. In Acaryochloris marina (strain MBIC 11017), this protein is Probable transcriptional regulatory protein AM1_1847.